We begin with the raw amino-acid sequence, 344 residues long: Phosphate acyltransferase (344 aa).

It belongs to the PlsX family. In terms of assembly, homodimer. Probably interacts with PlsY.

The protein localises to the cytoplasm. It carries out the reaction a fatty acyl-[ACP] + phosphate = an acyl phosphate + holo-[ACP]. The protein operates within lipid metabolism; phospholipid metabolism. Functionally, catalyzes the reversible formation of acyl-phosphate (acyl-PO(4)) from acyl-[acyl-carrier-protein] (acyl-ACP). This enzyme utilizes acyl-ACP as fatty acyl donor, but not acyl-CoA. The sequence is that of Phosphate acyltransferase from Paracidovorax citrulli (strain AAC00-1) (Acidovorax citrulli).